We begin with the raw amino-acid sequence, 144 residues long: MTIQVLNGPNLGRLGKREAAVYGSVTYAELVSLIEAEAAVLGVDVQVRQSDSEAELLGWVHDAADAKDPVILNAGAFTHTSVALRDACAELSAGLIEVHISNVHAREEFRHHSYLSALATGVIVGLGVQGYLLALRYFVASASS.

The Proton acceptor role is filled by Tyr22. Asn73, His79, and Asp86 together coordinate substrate. The active-site Proton donor is His99. Residues 100–101 and Arg110 each bind substrate; that span reads IS.

This sequence belongs to the type-II 3-dehydroquinase family. In terms of assembly, homododecamer.

It catalyses the reaction 3-dehydroquinate = 3-dehydroshikimate + H2O. It participates in metabolic intermediate biosynthesis; chorismate biosynthesis; chorismate from D-erythrose 4-phosphate and phosphoenolpyruvate: step 3/7. In terms of biological role, catalyzes a trans-dehydration via an enolate intermediate. The sequence is that of 3-dehydroquinate dehydratase from Mycobacteroides abscessus (strain ATCC 19977 / DSM 44196 / CCUG 20993 / CIP 104536 / JCM 13569 / NCTC 13031 / TMC 1543 / L948) (Mycobacterium abscessus).